The primary structure comprises 173 residues: Mesogenin-1 (173 aa).

Polar residues predominate over residues Glu39–Thr68. Disordered regions lie at residues Glu39–Gly69 and Thr96–Arg117. A compositionally biased stretch (basic residues) spans Asp99–Ala114. A bHLH domain is found at His109–Leu163.

It is found in the nucleus. Its function is as follows. Involved in specifying the paraxial, but not dorsal, mesoderm. May regulate the expression of T-box transcription factors required for mesoderm formation and differentiation, such as brachyury T, wnt8, vegt and eomes. The sequence is that of Mesogenin-1 (msgn1) from Xenopus laevis (African clawed frog).